A 246-amino-acid polypeptide reads, in one-letter code: Ribonuclease PH (246 aa).

Phosphate contacts are provided by residues Arg91 and 129–131 (GTR).

The protein belongs to the RNase PH family. Homohexameric ring arranged as a trimer of dimers.

The enzyme catalyses tRNA(n+1) + phosphate = tRNA(n) + a ribonucleoside 5'-diphosphate. In terms of biological role, phosphorolytic 3'-5' exoribonuclease that plays an important role in tRNA 3'-end maturation. Removes nucleotide residues following the 3'-CCA terminus of tRNAs; can also add nucleotides to the ends of RNA molecules by using nucleoside diphosphates as substrates, but this may not be physiologically important. Probably plays a role in initiation of 16S rRNA degradation (leading to ribosome degradation) during starvation. This chain is Ribonuclease PH, found in Paraburkholderia phytofirmans (strain DSM 17436 / LMG 22146 / PsJN) (Burkholderia phytofirmans).